The sequence spans 242 residues: 3-deoxy-manno-octulosonate cytidylyltransferase (242 aa).

The protein belongs to the KdsB family.

Its subcellular location is the cytoplasm. The catalysed reaction is 3-deoxy-alpha-D-manno-oct-2-ulosonate + CTP = CMP-3-deoxy-beta-D-manno-octulosonate + diphosphate. It functions in the pathway nucleotide-sugar biosynthesis; CMP-3-deoxy-D-manno-octulosonate biosynthesis; CMP-3-deoxy-D-manno-octulosonate from 3-deoxy-D-manno-octulosonate and CTP: step 1/1. It participates in bacterial outer membrane biogenesis; lipopolysaccharide biosynthesis. Functionally, activates KDO (a required 8-carbon sugar) for incorporation into bacterial lipopolysaccharide in Gram-negative bacteria. The sequence is that of 3-deoxy-manno-octulosonate cytidylyltransferase from Anaeromyxobacter dehalogenans (strain 2CP-C).